The following is a 230-amino-acid chain: Lipopolysaccharide core heptose(II) kinase WaaY (230 aa).

Belongs to the protein kinase superfamily. RfaY/WaaY family.

It carries out the reaction alpha-D-Glc-(1-&gt;3)-[L-alpha-D-Hep-(1-&gt;7)]-L-alpha-D-Hep-(1-&gt;3)-4-O-PO3(2-)-L-alpha-D-Hep-(1-&gt;5)-[alpha-Kdo-(2-&gt;4)]-alpha-Kdo-(2-&gt;6)-lipid A + ATP = alpha-D-Glc-(1-&gt;3)-[L-alpha-D-Hep-(1-&gt;7)]-4-O-PO3(2-)-L-alpha-D-Hep-(1-&gt;3)-4-O-PO3(2-)-L-alpha-D-Hep-(1-&gt;5)-[alpha-Kdo-(2-&gt;4)]-alpha-Kdo-(2-&gt;6)-lipid A + ADP + H(+). Its pathway is bacterial outer membrane biogenesis; LPS core biosynthesis. Kinase involved in the biosynthesis of the core oligosaccharide region of lipopolysaccharide (LPS). Catalyzes the phosphorylation of the second heptose unit (HepII) of the inner core. This chain is Lipopolysaccharide core heptose(II) kinase WaaY, found in Escherichia coli.